We begin with the raw amino-acid sequence, 297 residues long: Transcription factor bHLH129 (297 aa).

A disordered region spans residues 1 to 145; sequence MYPPNSSKST…SSSHQEHNSL (145 aa). S35 is modified (phosphoserine). Over residues 68-82 the composition is skewed to low complexity; it reads SSIGFDSNASSSSSL. Gly residues predominate over residues 111–121; it reads PNGGYGGGGEQ. The residue at position 138 (S138) is a Phosphoserine. The region spanning 239–289 is the bHLH domain; that stretch reads FATHPRSIAERERRTRISGKLKKLQELVPNMDKQTSYADMLDLAVEHIKGL.

As to quaternary structure, homodimer.

Its subcellular location is the nucleus. This chain is Transcription factor bHLH129 (BHLH129), found in Arabidopsis thaliana (Mouse-ear cress).